The sequence spans 332 residues: MSGIWVLLSLVFTCIAGPLSKGDDAQVTDPDSEMVKLNITKRESECPEGQHREGQFCCQPCPPGKRKHADCTSPGGAPQCVPCSEGEDYTDKNHHSSKCRRCRVCDGEHGLEVEKNCTRTQNTKCRCKPNFFCHTSQCEHCNPCTTCEHGVIENCTPTSNTKCREVFQSAGSRSNLHWLWALLILIPVPALVYREVKRRCRRKENGYQKPITSNAEEVPMIKDVDLGKYITRIAEQMKITEVKDFVRKNGIEETKIDEIMHDNPKDTAEQKVQLLRNWYLYHGKKDAYCTLIQGLRKAKLSALADKINDIVQKDVTSEQENANSQNENESLT.

Positions 1-16 (MSGIWVLLSLVFTCIA) are cleaved as a signal peptide. Over 17–175 (GPLSKGDDAQ…VFQSAGSRSN (159 aa)) the chain is Extracellular. N38 carries N-linked (GlcNAc...) asparagine glycosylation. TNFR-Cys repeat units lie at residues 45–81 (ECPE…PQCV), 82–125 (PCSE…NTKC), and 126–164 (RCKP…TKCR). 9 cysteine pairs are disulfide-bonded: C46-C57, C58-C71, C61-C80, C83-C99, C102-C117, C105-C125, C127-C141, C144-C155, and C147-C163. N116 carries an N-linked (GlcNAc...) asparagine glycan. Residues 176-192 (LHWLWALLILIPVPALV) form a helical membrane-spanning segment. Residues 193-332 (YREVKRRCRR…NSQNENESLT (140 aa)) lie on the Cytoplasmic side of the membrane. C200 is lipidated: S-palmitoyl cysteine. The tract at residues 210–314 (PITSNAEEVP…DKINDIVQKD (105 aa)) is interaction with HIPK3. A Phosphothreonine modification is found at T212. The interval 227–251 (GKYITRIAEQMKITEVKDFVRKNGI) is interaction with CALM. Residues 227–311 (GKYITRIAEQ…ALADKINDIV (85 aa)) enclose the Death domain.

As to quaternary structure, component of the death-induced signaling complex (DISC) composed of cell surface receptor FAS/CD95, adapter protein FADD and the CASP8 protease; recruitment of CASP8 to the complex is required for processing of CASP8 into the p18 and p10 subunits. Interacts directly (via DED domain) with NOL3 (via CARD domain); inhibits death-inducing signaling complex (DISC) assembly by inhibiting the increase in FAS-FADD binding induced by FAS activation. Binds DAXX. Interacts with HIPK3. Part of a complex containing HIPK3 and FADD. Binds RIPK1 and FAIM2. Interacts with BABAM2 and FEM1B. Interacts with CALM. In the absence of stimulation, interacts with BIRC2, DDX3X and GSK3B. The interaction with BIRC2 and DDX3X is further enhanced upon receptor stimulation and accompanied by DDX3X and BIRC2 cleavage. In terms of processing, palmitoylated. Palmitoylation by ZDHHC7 prevents the lysosomal degradation of FAS regulating its expression at the plasma membrane.

The protein localises to the cell membrane. It is found in the membrane raft. Functionally, receptor for TNFSF6/FASLG. The adapter molecule FADD recruits caspase CASP8 to the activated receptor. The resulting death-inducing signaling complex (DISC) performs CASP8 proteolytic activation which initiates the subsequent cascade of caspases (aspartate-specific cysteine proteases) mediating apoptosis. FAS-mediated apoptosis may have a role in the induction of peripheral tolerance, in the antigen-stimulated suicide of mature T-cells, or both. In Sus scrofa (Pig), this protein is Tumor necrosis factor receptor superfamily member 6 (FAS).